A 511-amino-acid chain; its full sequence is Maturase K (511 aa).

It belongs to the intron maturase 2 family. MatK subfamily.

It is found in the plastid. Its subcellular location is the chloroplast. Functionally, usually encoded in the trnK tRNA gene intron. Probably assists in splicing its own and other chloroplast group II introns. The chain is Maturase K from Paulownia tomentosa (Princess tree).